We begin with the raw amino-acid sequence, 149 residues long: SPbeta prophage-derived putative transcriptional regulator YosT (149 aa).

This is SPbeta prophage-derived putative transcriptional regulator YosT (yosT) from Bacillus subtilis (strain 168).